The following is a 472-amino-acid chain: Mitochondrial substrate carrier family protein C (472 aa).

Over 1–189 (MVLNENDKEF…ASSLRNTITY (189 aa)) the chain is Mitochondrial intermembrane. 4 consecutive EF-hand domains span residues 6-41 (NDKE…LRIP), 42-70 (SSEK…FEDF), 73-108 (ENIK…LNIP), and 110-145 (YSEQ…LPNS). 20 residues coordinate Ca(2+): D19, D21, N23, K25, E30, D55, D57, D59, S61, E66, D86, N88, S90, T92, E97, D123, N125, D127, Q129, and E134. Solcar repeat units follow at residues 184 to 268 (RNTI…VKKL), 276 to 362 (LTSA…LKHK), and 375 to 461 (GQLL…FKKA). A helical transmembrane segment spans residues 190–207 (MLAGSVAGFASRTSTAPL). Residues 208-242 (ERVKIMCQLNHGKPISLISAFKACYKDGGIKGFFR) are Mitochondrial matrix-facing. Residues 243 to 263 (GNLANIIKVSPESAVKFGTYE) form a helical membrane-spanning segment. Topologically, residues 264-281 (YVKKLFAENDCELTSAQR) are mitochondrial intermembrane. A helical transmembrane segment spans residues 282-302 (FISGSVAGVVSHTTLFPLEVV). Over 303 to 330 (RLRLSAEIAGTYNGIFDCFKKIAISEKS) the chain is Mitochondrial matrix. A helical membrane pass occupies residues 331 to 351 (IRPFYRGLGASITATIPHSGV). The Mitochondrial intermembrane segment spans residues 352 to 377 (NMMVYEFLKHKVIKMTGNEFPTAGQL). Residues 378–398 (LVCASTSSVCGQLVGYPFHVV) form a helical membrane-spanning segment. Residues 399–441 (KSRLITQGSSVNQEKYTGLFDGLTKIIKKEGPIGLYKGIVPSF) are Mitochondrial matrix-facing. The chain crosses the membrane as a helical span at residues 442 to 462 (MKSIPSHSITFIVYEGFKKAF). Topologically, residues 463–472 (DVNLKEKKHH) are mitochondrial intermembrane.

The protein belongs to the mitochondrial carrier (TC 2.A.29) family.

The protein resides in the mitochondrion inner membrane. Its function is as follows. Calcium-dependent mitochondrial solute carrier. Mitochondrial solute carriers shuttle metabolites, nucleotides, and cofactors through the mitochondrial inner membrane. This chain is Mitochondrial substrate carrier family protein C (mcfC), found in Dictyostelium discoideum (Social amoeba).